Consider the following 218-residue polypeptide: THAP domain-containing protein 3 (218 aa).

The THAP-type zinc finger occupies 1-82 (MPKSCAARQC…LKHNAVPTVF (82 aa)). Disordered stretches follow at residues 97–120 (GGDS…PEGP) and 133–154 (ATEA…PGQP). A Phosphoserine modification is found at S100. The HCFC1-binding motif (HBM) signature appears at 156 to 159 (DHSY).

Component of a THAP1/THAP3-HCFC1-OGT complex that contains at least, either THAP1 or THAP3, HCFC1 and OGT. Interacts directly with OGT and HCFC1 (via its HBM). Highest levels in heart, liver and kidney. Lower levels in brain and lung.

Component of a THAP1/THAP3-HCFC1-OGT complex that is required for the regulation of the transcriptional activity of RRM1. This chain is THAP domain-containing protein 3 (Thap3), found in Mus musculus (Mouse).